Consider the following 199-residue polypeptide: dITP/XTP pyrophosphatase (199 aa).

Residue Ser7–Lys12 coordinates substrate. The active-site Proton acceptor is Asp68. Position 68 (Asp68) interacts with Mg(2+). Substrate is bound by residues Ala69, Phe154–Asp157, Lys177, and His182–Arg183.

The protein belongs to the HAM1 NTPase family. As to quaternary structure, homodimer. The cofactor is Mg(2+).

It catalyses the reaction XTP + H2O = XMP + diphosphate + H(+). The enzyme catalyses dITP + H2O = dIMP + diphosphate + H(+). The catalysed reaction is ITP + H2O = IMP + diphosphate + H(+). Pyrophosphatase that catalyzes the hydrolysis of nucleoside triphosphates to their monophosphate derivatives, with a high preference for the non-canonical purine nucleotides XTP (xanthosine triphosphate), dITP (deoxyinosine triphosphate) and ITP. Seems to function as a house-cleaning enzyme that removes non-canonical purine nucleotides from the nucleotide pool, thus preventing their incorporation into DNA/RNA and avoiding chromosomal lesions. In Verminephrobacter eiseniae (strain EF01-2), this protein is dITP/XTP pyrophosphatase.